Here is a 52-residue protein sequence, read N- to C-terminus: uncharacterized protein (52 aa).

This is an uncharacterized protein from Caenorhabditis elegans.